The primary structure comprises 65 residues: Precursor peptide TigB (65 aa).

6 TIGSVS motif repeats span residues 16–21 (TIGSVS), 23–28 (TIGSVS), 33–38 (TIGSVS), 40–45 (TIGSVS), 47–52 (TIGSVS), and 54–59 (TIGSVS). Ile-17, Ile-24, Ile-34, Ile-41, Ile-48, and Ile-55 each carry methylcyclopropylglycine.

Is subject to maturation by TigE, that catalyzes the formation of methylcyclopropylglycine (mCPG) residues from isoleucine residues residing in the repeating TIGSVS motifs.

Precursor peptide which undergoes post-translational modifications by tailoring enzymes, leading to the mature natural product. In Paramaledivibacter caminithermalis (strain DSM 15212 / CIP 107654 / DViRD3) (Clostridium caminithermale), this protein is Precursor peptide TigB.